Consider the following 308-residue polypeptide: Protoheme IX farnesyltransferase (308 aa).

8 helical membrane passes run 20 to 40 (LLAYLALTKPRVIELLLVTAI), 50 to 70 (AIHPLLMLNTLVGGMMAAAGA), 102 to 122 (NALALGLTLTVISFFWLWCAT), 124 to 144 (LLAGVLALVTVAFYVFVYTLW), 149 to 169 (TSQNVVWGGAAGCMPVMIGWS), 170 to 190 (AITGTIAWPALAMFAIIFFWT), 227 to 249 (LIYTWLTVAATLVLALATSWLYG), and 288 to 308 (YLAVVFCALAVDSVIALPTLH).

It belongs to the UbiA prenyltransferase family. Protoheme IX farnesyltransferase subfamily.

Its subcellular location is the cell membrane. It carries out the reaction heme b + (2E,6E)-farnesyl diphosphate + H2O = Fe(II)-heme o + diphosphate. Its pathway is porphyrin-containing compound metabolism; heme O biosynthesis; heme O from protoheme: step 1/1. In terms of biological role, converts heme B (protoheme IX) to heme O by substitution of the vinyl group on carbon 2 of heme B porphyrin ring with a hydroxyethyl farnesyl side group. The protein is Protoheme IX farnesyltransferase of Mycobacterium tuberculosis (strain ATCC 25618 / H37Rv).